A 178-amino-acid chain; its full sequence is ATP synthase subunit delta (178 aa).

The protein belongs to the ATPase delta chain family. As to quaternary structure, F-type ATPases have 2 components, F(1) - the catalytic core - and F(0) - the membrane proton channel. F(1) has five subunits: alpha(3), beta(3), gamma(1), delta(1), epsilon(1). F(0) has three main subunits: a(1), b(2) and c(10-14). The alpha and beta chains form an alternating ring which encloses part of the gamma chain. F(1) is attached to F(0) by a central stalk formed by the gamma and epsilon chains, while a peripheral stalk is formed by the delta and b chains.

The protein resides in the cell membrane. Functionally, f(1)F(0) ATP synthase produces ATP from ADP in the presence of a proton or sodium gradient. F-type ATPases consist of two structural domains, F(1) containing the extramembraneous catalytic core and F(0) containing the membrane proton channel, linked together by a central stalk and a peripheral stalk. During catalysis, ATP synthesis in the catalytic domain of F(1) is coupled via a rotary mechanism of the central stalk subunits to proton translocation. Its function is as follows. This protein is part of the stalk that links CF(0) to CF(1). It either transmits conformational changes from CF(0) to CF(1) or is implicated in proton conduction. This chain is ATP synthase subunit delta, found in Moorella thermoacetica (strain ATCC 39073 / JCM 9320).